We begin with the raw amino-acid sequence, 714 residues long: ATP-dependent zinc metalloprotease FtsH (714 aa).

The Cytoplasmic portion of the chain corresponds to 1-75 (MEKPRRLRPR…KNPMEPRQQQ (75 aa)). A helical transmembrane segment spans residues 76–96 (FSLWYVLVTILAMLAIQTLFV). Residues 97–188 (SGHVETIPYS…FVGQPDNKWL (92 aa)) lie on the Periplasmic side of the membrane. A helical transmembrane segment spans residues 189 to 209 (STILSWVVPAVIFFGIWSFLI). Residues 210-714 (KRVGGAAGSM…GKPDQKTQGT (505 aa)) are Cytoplasmic-facing. Position 280-287 (280-287 (GAPGTGKT)) interacts with ATP. Residue H502 coordinates Zn(2+). The active site involves E503. Residues H506 and D579 each coordinate Zn(2+). The tract at residues 688–714 (PMPPPKPVANIEESTATGKPDQKTQGT) is disordered. The segment covering 699–714 (EESTATGKPDQKTQGT) has biased composition (polar residues).

The protein in the central section; belongs to the AAA ATPase family. It in the C-terminal section; belongs to the peptidase M41 family. In terms of assembly, homohexamer. It depends on Zn(2+) as a cofactor.

The protein localises to the cell inner membrane. Functionally, acts as a processive, ATP-dependent zinc metallopeptidase for both cytoplasmic and membrane proteins. Plays a role in the quality control of integral membrane proteins. This chain is ATP-dependent zinc metalloprotease FtsH, found in Ralstonia pickettii (strain 12J).